Here is a 247-residue protein sequence, read N- to C-terminus: Cytochrome c oxidase subunit 2 (247 aa).

Residues 12 to 38 (DVPTPWGLYFQDSSTPNQEGIIELHDN) are Mitochondrial intermembrane-facing. Residues 39 to 59 (IMFYLVLILCTVSWLLFSIVK) form a helical membrane-spanning segment. Residues 60 to 78 (DSSKNPLPHKYLVHGQTIE) are Mitochondrial matrix-facing. Residues 79-101 (IIWTILPAVVLLIIAFPSFILLY) traverse the membrane as a helical segment. The Mitochondrial intermembrane segment spans residues 102 to 247 (LCDEVISPAM…KEFLTWLNEQ (146 aa)). Cu cation is bound by residues His-182, Cys-217, Glu-219, Cys-221, His-225, and Met-228. Residue Glu-219 participates in Mg(2+) binding.

It belongs to the cytochrome c oxidase subunit 2 family. Component of the cytochrome c oxidase (complex IV, CIV), a multisubunit enzyme composed of a catalytic core of 3 subunits and several supernumerary subunits. The complex exists as a monomer or a dimer and forms supercomplexes (SCs) in the inner mitochondrial membrane with ubiquinol-cytochrome c oxidoreductase (cytochrome b-c1 complex, complex III, CIII). Cu cation is required as a cofactor. Post-translationally, the signal sequence of COX2 is processed by IMP1.

It localises to the mitochondrion inner membrane. The enzyme catalyses 4 Fe(II)-[cytochrome c] + O2 + 8 H(+)(in) = 4 Fe(III)-[cytochrome c] + 2 H2O + 4 H(+)(out). In terms of biological role, component of the cytochrome c oxidase, the last enzyme in the mitochondrial electron transport chain which drives oxidative phosphorylation. The respiratory chain contains 3 multisubunit complexes succinate dehydrogenase (complex II, CII), ubiquinol-cytochrome c oxidoreductase (cytochrome b-c1 complex, complex III, CIII) and cytochrome c oxidase (complex IV, CIV), that cooperate to transfer electrons derived from NADH and succinate to molecular oxygen, creating an electrochemical gradient over the inner membrane that drives transmembrane transport and the ATP synthase. Cytochrome c oxidase is the component of the respiratory chain that catalyzes the reduction of oxygen to water. Electrons originating from reduced cytochrome c in the intermembrane space (IMS) are transferred via the dinuclear copper A center (CU(A)) of subunit 2 and heme A of subunit 1 to the active site in subunit 1, a binuclear center (BNC) formed by heme A3 and copper B (CU(B)). The BNC reduces molecular oxygen to 2 water molecules using 4 electrons from cytochrome c in the IMS and 4 protons from the mitochondrial matrix. This Cyberlindnera saturnus (Yeast) protein is Cytochrome c oxidase subunit 2 (COX2).